We begin with the raw amino-acid sequence, 906 residues long: Eukaryotic translation initiation factor 4 gamma 2 (906 aa).

Methionine 1 is subject to N-acetylmethionine. The segment at 1 to 71 (MESAIAEGGA…SAANNSANEK (71 aa)) is disordered. A Phosphoserine modification is found at serine 11. An MIF4G domain is found at 78-308 (FRKVRGILNK…QDTVELREHH (231 aa)). Threonine 89 bears the Phosphothreonine mark. Arginine 359 bears the Omega-N-methylarginine mark. The residue at position 394 (serine 394) is a Phosphoserine. Residue lysine 430 is modified to N6-methyllysine. Serine 442 carries the post-translational modification Phosphoserine. The segment at 497–540 (PPSAQPPRTQTPPLGQTPQLGLKTNPPLIQEKPAKTSKKPPPSK) is disordered. Residues 502–515 (PPRTQTPPLGQTPQ) show a composition bias toward polar residues. Arginine 504 carries the post-translational modification Omega-N-methylarginine. Phosphothreonine is present on residues threonine 507 and threonine 513. In terms of domain architecture, MI spans 542–665 (ELLKLTEAVV…SISELAQPLE (124 aa)). Lysine 574 is covalently cross-linked (Glycyl lysine isopeptide (Lys-Gly) (interchain with G-Cter in SUMO2)). In terms of domain architecture, W2 spans 719-903 (EGKGLSFLFP…ETAEEEESEE (185 aa)). Position 901 is a phosphoserine (serine 901).

This sequence belongs to the eukaryotic initiation factor 4G family. In terms of assembly, interacts with the serine/threonine protein kinases MKNK1 and MKNK2. Binds EIF4A and EIF3. Interacts with MIF4GD. Interacts with DAZAP2. Post-translationally, phosphorylation; hyperphosphorylated during mitosis. As to expression, ubiquitously expressed in all tissues examined.

Functionally, appears to play a role in the switch from cap-dependent to IRES-mediated translation during mitosis, apoptosis and viral infection. Cleaved by some caspases and viral proteases. This chain is Eukaryotic translation initiation factor 4 gamma 2, found in Mus musculus (Mouse).